The chain runs to 181 residues: Protein Syd (181 aa).

It belongs to the Syd family.

Its subcellular location is the cell inner membrane. In terms of biological role, interacts with the SecY protein in vivo. May bind preferentially to an uncomplexed state of SecY, thus functioning either as a chelating agent for excess SecY in the cell or as a regulatory factor that negatively controls the translocase function. The protein is Protein Syd of Salmonella arizonae (strain ATCC BAA-731 / CDC346-86 / RSK2980).